The following is a 321-amino-acid chain: Phospholipid phosphatase-related protein type 5 (321 aa).

6 consecutive transmembrane segments (helical) span residues 6–26 (VALI…TVML), 62–82 (AVPP…VIIV), 122–142 (FLGI…AGQV), 196–213 (AALS…ITST), 225–245 (VLCL…VAEY), and 252–272 (VIAG…CVVN).

This sequence belongs to the PA-phosphatase related phosphoesterase family.

The protein localises to the cell membrane. Functionally, induces filopodia formation and promotes neurite growth in a CDC42-independent manner; impedes neurite growth inhibitory-mediated axonal retraction. This is Phospholipid phosphatase-related protein type 5 from Mus musculus (Mouse).